Reading from the N-terminus, the 512-residue chain is NAD(P)H-quinone oxidoreductase chain 4, chloroplastic (512 aa).

The next 14 helical transmembrane spans lie at 4 to 24, 34 to 54, 87 to 107, 111 to 131, 134 to 154, 167 to 187, 208 to 228, 242 to 262, 274 to 294, 308 to 328, 330 to 350, 374 to 396, 417 to 437, and 462 to 482; these read VPWLTAIVLFPVSAGLLIPLL, WYALGICLLDLILMTYVFGCY, IGLILLTGFVTTLATLAAWPV, PKLFYFLMLAMYSGQLGLFAS, ILLFFVMWELELIPVYLLLSM, FILYTAGGSIFLLAGLLTASL, GLEILIYLGFLIAYAVKLPAF, HYSTCMLLAGILLKMGGYGFI, TVFAPWLVALGAYQIVYAALV, SSVSHMGFVLVGAGSLSDLGL, GAMLQMISHGLIGASLFFLAG, MFAMFTTCAMASLALPGMSGFVS, IITLIEAVGIILTPIYLLSMV, and VFVLGSLLLPMIGIGIYPNFA.

It belongs to the complex I subunit 4 family.

It localises to the plastid. The protein resides in the chloroplast thylakoid membrane. It carries out the reaction a plastoquinone + NADH + (n+1) H(+)(in) = a plastoquinol + NAD(+) + n H(+)(out). The catalysed reaction is a plastoquinone + NADPH + (n+1) H(+)(in) = a plastoquinol + NADP(+) + n H(+)(out). The protein is NAD(P)H-quinone oxidoreductase chain 4, chloroplastic of Zygnema circumcarinatum (Green alga).